A 315-amino-acid chain; its full sequence is Biotin synthase (315 aa).

In terms of domain architecture, Radical SAM core spans 39–266 (NSLQFATLLS…KSAIRLTAGR (228 aa)). [4Fe-4S] cluster is bound by residues Cys-54, Cys-58, and Cys-61. [2Fe-2S] cluster is bound by residues Cys-98, Cys-129, Cys-189, and Arg-261.

Belongs to the radical SAM superfamily. Biotin synthase family. As to quaternary structure, homodimer. Requires [4Fe-4S] cluster as cofactor. [2Fe-2S] cluster serves as cofactor.

The enzyme catalyses (4R,5S)-dethiobiotin + (sulfur carrier)-SH + 2 reduced [2Fe-2S]-[ferredoxin] + 2 S-adenosyl-L-methionine = (sulfur carrier)-H + biotin + 2 5'-deoxyadenosine + 2 L-methionine + 2 oxidized [2Fe-2S]-[ferredoxin]. The protein operates within cofactor biosynthesis; biotin biosynthesis; biotin from 7,8-diaminononanoate: step 2/2. Its function is as follows. Catalyzes the conversion of dethiobiotin (DTB) to biotin by the insertion of a sulfur atom into dethiobiotin via a radical-based mechanism. This chain is Biotin synthase, found in Legionella pneumophila (strain Paris).